A 156-amino-acid polypeptide reads, in one-letter code: Small ribosomal subunit protein uS7 (156 aa).

Belongs to the universal ribosomal protein uS7 family. In terms of assembly, part of the 30S ribosomal subunit. Contacts proteins S9 and S11.

One of the primary rRNA binding proteins, it binds directly to 16S rRNA where it nucleates assembly of the head domain of the 30S subunit. Is located at the subunit interface close to the decoding center, probably blocks exit of the E-site tRNA. The protein is Small ribosomal subunit protein uS7 of Synechococcus sp. (strain CC9311).